The primary structure comprises 144 residues: Ig heavy chain V region MOPC 141 (144 aa).

A signal peptide spans 1 to 19 (MAVLALLFCLATFPSCILS). The 111-residue stretch at 20-130 (QVQLKESGPG…YYGRSDKYFT (111 aa)) folds into the Ig-like domain.

In Mus musculus (Mouse), this protein is Ig heavy chain V region MOPC 141.